A 705-amino-acid polypeptide reads, in one-letter code: Elongation factor G (705 aa).

Residues 8–290 (AYYRNIGISA…AVIEYLPAPT (283 aa)) form the tr-type G domain. GTP is bound by residues 17–24 (AHIDAGKT), 88–92 (DTPGH), and 142–145 (NKMD).

It belongs to the TRAFAC class translation factor GTPase superfamily. Classic translation factor GTPase family. EF-G/EF-2 subfamily.

The protein localises to the cytoplasm. Its function is as follows. Catalyzes the GTP-dependent ribosomal translocation step during translation elongation. During this step, the ribosome changes from the pre-translocational (PRE) to the post-translocational (POST) state as the newly formed A-site-bound peptidyl-tRNA and P-site-bound deacylated tRNA move to the P and E sites, respectively. Catalyzes the coordinated movement of the two tRNA molecules, the mRNA and conformational changes in the ribosome. The protein is Elongation factor G of Baumannia cicadellinicola subsp. Homalodisca coagulata.